The primary structure comprises 292 residues: Protein CHLOROPLAST ENHANCING STRESS TOLERANCE, chloroplastic (292 aa).

Residues 1–15 are compositionally biased toward pro residues; that stretch reads MALLSPPSPPPPLPP. The transit peptide at 1-67 directs the protein to the chloroplast; sequence MALLSPPSPP…RSSRRRRRVA (67 aa). 2 disordered regions span residues 1 to 119 and 206 to 225; these read MALL…DLED and MEAP…KATD. Composition is skewed to low complexity over residues 49 to 58 and 94 to 107; these read STANARAYSR and ASSD…ASSA. The chain crosses the membrane as a helical span at residues 267–287; sequence ALYLLTAFPVIIGISVVLILF.

This sequence belongs to the Y3IP1/CEST family.

Its subcellular location is the plastid. It is found in the chloroplast thylakoid membrane. Its function is as follows. Involved in light-induced chloroplast development and growth. Involved in the plant response to abiotic and photooxidative stresses. May be involved in the suppression of photooxidative damage. This chain is Protein CHLOROPLAST ENHANCING STRESS TOLERANCE, chloroplastic, found in Oryza sativa subsp. indica (Rice).